The primary structure comprises 364 residues: Baseplate tail-tube junction protein gp48 (364 aa).

As to quaternary structure, homohexamer. The tube first annulus is composed of a gp48 hexameric ring. Interacts with gp54. Part of the baseplate macromolecular complex which consists of gp5, gp5.4, gp27 (central spike complex); gp6, gp25, gp53 (inner baseplate); gp7, gp8 (intermediate baseplate); gp9, gp10, gp11, gp12 (peripheral); gp48 and gp54 (proximal region of the tail tube).

It localises to the virion. Its function is as follows. Baseplate protein that forms, together with gp54, the baseplate-tail tube junction. The tail tube first 2 annuli are formed by gp48 and gp54, which are in continuation of the spike complex. Involved in the tail assembly. Morphogenesis of the baseplate is completed by association of gp48 and gp54, which bind the upper part of the baseplate dome to form the platform for polymerization of the tail tube. This is Baseplate tail-tube junction protein gp48 (48) from Escherichia coli (Bacteriophage T4).